We begin with the raw amino-acid sequence, 336 residues long: F420-dependent glucose-6-phosphate dehydrogenase (336 aa).

Coenzyme F420-(gamma-Glu)n is bound at residue Asp39. The active-site Proton donor is the His40. Residues Thr76 and 107–108 each bind coenzyme F420-(gamma-Glu)n; that span reads TG. Catalysis depends on Glu109, which acts as the Proton acceptor. Coenzyme F420-(gamma-Glu)n is bound by residues Asn112, 177-178, and 180-181; these read GG and AV. Thr195, Lys198, Lys259, and Arg283 together coordinate substrate.

The protein belongs to the F420-dependent glucose-6-phosphate dehydrogenase family. Homodimer.

It carries out the reaction oxidized coenzyme F420-(gamma-L-Glu)(n) + D-glucose 6-phosphate + H(+) = 6-phospho-D-glucono-1,5-lactone + reduced coenzyme F420-(gamma-L-Glu)(n). Functionally, catalyzes the coenzyme F420-dependent oxidation of glucose 6-phosphate (G6P) to 6-phosphogluconolactone. Appears to have a role in resistance to oxidative stress, via its consumption of G6P that serves as a source of reducing power to combat oxidative stress in mycobacteria. More precisely, is likely involved in a F420-dependent anti-oxidant mechanism that protects M.tuberculosis against oxidative stress and bactericidal agents. In terms of biological role, is essential for the bioreductive activation of the bicyclic 4-nitroimidazole prodrug PA-824 (nitroimidazo-oxazine) developed for anti-tuberculosis therapy against both replicating and persistent bacteria. It does not interact directly with PA-824 but, rather, provides reduced F420 to the deazaflavin-dependent nitroreductase Ddn, which in turn activates PA-824. This is F420-dependent glucose-6-phosphate dehydrogenase (fgd1) from Mycobacterium tuberculosis (strain CDC 1551 / Oshkosh).